Consider the following 418-residue polypeptide: UDP-N-acetylglucosamine 1-carboxyvinyltransferase (418 aa).

22–23 (KN) contributes to the phosphoenolpyruvate binding site. Residue R91 coordinates UDP-N-acetyl-alpha-D-glucosamine. Residue C115 is the Proton donor of the active site. Residue C115 is modified to 2-(S-cysteinyl)pyruvic acid O-phosphothioketal. UDP-N-acetyl-alpha-D-glucosamine is bound by residues D303 and I325.

This sequence belongs to the EPSP synthase family. MurA subfamily.

The protein resides in the cytoplasm. It carries out the reaction phosphoenolpyruvate + UDP-N-acetyl-alpha-D-glucosamine = UDP-N-acetyl-3-O-(1-carboxyvinyl)-alpha-D-glucosamine + phosphate. Its pathway is cell wall biogenesis; peptidoglycan biosynthesis. Its function is as follows. Cell wall formation. Adds enolpyruvyl to UDP-N-acetylglucosamine. This chain is UDP-N-acetylglucosamine 1-carboxyvinyltransferase, found in Syntrophobacter fumaroxidans (strain DSM 10017 / MPOB).